Consider the following 194-residue polypeptide: Large ribosomal subunit protein uL24c (194 aa).

Residues 1-50 (MVAMAMASLQSSMSSLSLSSNSFLGQPLSPITLSPFLQGKPTEKKCLIVM) constitute a chloroplast transit peptide.

This sequence belongs to the universal ribosomal protein uL24 family. Part of the 50S ribosomal subunit.

The protein localises to the plastid. It is found in the chloroplast. Functionally, one of two assembly initiator proteins, it binds directly to the 5'-end of the 23S rRNA, where it nucleates assembly of the 50S subunit. This chain is Large ribosomal subunit protein uL24c (RPL24), found in Pisum sativum (Garden pea).